The following is a 352-amino-acid chain: Adenosine deaminase (352 aa).

The Zn(2+) site is built by histidine 24 and histidine 26. The substrate site is built by histidine 26, aspartate 28, and glycine 181. Position 208 (histidine 208) interacts with Zn(2+). Glutamate 211 acts as the Proton donor in catalysis. Zn(2+) is bound at residue aspartate 290.

It belongs to the metallo-dependent hydrolases superfamily. Adenosine and AMP deaminases family. Adenosine deaminase subfamily. The cofactor is Zn(2+).

It carries out the reaction adenosine + H2O + H(+) = inosine + NH4(+). It catalyses the reaction 2'-deoxyadenosine + H2O + H(+) = 2'-deoxyinosine + NH4(+). Catalyzes the hydrolytic deamination of adenosine and 2-deoxyadenosine. The polypeptide is Adenosine deaminase (Lactococcus lactis subsp. lactis (strain IL1403) (Streptococcus lactis)).